The sequence spans 969 residues: MKKRDFLEWLRSVEAKWQSKWMEKKIFEPRIEPDKPKYFITVPYPYTNAPLHIGHGRTYTIGDIIARYKRLRGYNVLFPMAFHITGTPIIAISERISRGEEEIINRYKSYIAKYVKDPVEIEKIIESFKDPLNLAVFFAERVHMDFDALGYSIDWRRRFHTGEPIYNAFVTWQFLKLREKGLIKRGDHVVTYCLLHKQPEGEDDIQDADVNPVEILEFTAIKFKLLGEENTYLVAATLRPETLFGATNLWVKPDADYVVVEWRGENIIVSKEALVKLQHQHPLDEFKVVGEMKGRELVGKKVVSPLGNELIVLPADFVDPDNATGIVYSEPSDAPYDYVALMELKKNSEKLAMYGVDPEVVKKIEPIKIIDVPGIKGHHAGIVVEEMGISSQFDPRLVEATKIVYREQYYKGVMIVDDPEFKGLSVSEAKEKIKKKLLRENKGFVFYELNRKAYCRAGGKIIAAKIIGQWFIDYSVPWWKEEAKKYVSEKMRIIPVKYKKAMLDAIDWLERRPCARKRGLGTRLPFDPEWVIESLSDSTIYMAFYTIAHLIRKHNIKPEQLKPQVFDYVFLGKGDPEEISEDTGIPLKALEEMRQEFNYWYPVDQRHTGIAHISNHLSFFIYHHIAIFPRKHWPKMITLNEMVIREGTKMSKSKGNVILLRDIAEKYSADLFRLYIAGAANLDTVLDWREKEVERVIDSLKKFTAIAEKAIRTKCGTYSHDKYIDKWFLSKFNRLLAEATNALDNMEIRDYVQKMFYDVMVSIDHYRERTSNEETICMIKRILSKWLKSLNPVIPHLTEEIWSWMGKEEFLSLEKWPEIDYKAINEEVEYLEEAIEALIEDIKNVLNILSPKPKHAYIVVASPWKREVIEMIEKGMDRREIIRTIRDKYGLKGREKEIVYVIQECSRTPCKRALKIDPIHEYEAYNEARQYIAKKTGLHIEVYWEEEAKAKNIPKAEKTLPLKPSFYLY.

Positions 45 to 55 (PYTNAPLHIGH) match the 'HIGH' region motif. Positions 649–653 (KMSKS) match the 'KMSKS' region motif. Lys652 is a binding site for ATP.

This sequence belongs to the class-I aminoacyl-tRNA synthetase family.

The protein resides in the cytoplasm. The enzyme catalyses tRNA(Leu) + L-leucine + ATP = L-leucyl-tRNA(Leu) + AMP + diphosphate. This is Leucine--tRNA ligase from Staphylothermus marinus (strain ATCC 43588 / DSM 3639 / JCM 9404 / F1).